A 555-amino-acid polypeptide reads, in one-letter code: uncharacterized protein (555 aa).

Over 1–83 the chain is Extracellular; that stretch reads MSNEDETTRL…GRRKLLCLYG (83 aa). Residues 84 to 104 form a helical membrane-spanning segment; that stretch reads LVMIICIAESISMTATIPLVM. Residues 105–125 lie on the Cytoplasmic side of the membrane; it reads DKVAEGISDENGHYDSVAVQT. The chain crosses the membrane as a helical span at residues 126-146; sequence IVSSISSSTMMIAGAISIFMA. The Extracellular portion of the chain corresponds to 147–188; sequence GKWGELSDRIGRVRVFKYMSGIRVIGLLTHVFTLSSKMKYHK. The helical transmembrane segment at 189–209 threads the bilayer; it reads WAIVLTACIVPSFGGLFALVA. Residues 210-229 lie on the Cytoplasmic side of the membrane; the sequence is NGNSYVSDIVKTEHRMVTIG. Residues 230–250 form a helical membrane-spanning segment; sequence IMMSCIYATMGVGPMFGSFLV. Residues 251 to 257 lie on the Extracellular side of the membrane; the sequence is KWTHGNG. A helical transmembrane segment spans residues 258-278; the sequence is FIPIYTSIAFVILALIICETI. Topologically, residues 279 to 356 are cytoplasmic; that stretch reads MVEPRHETQM…LVPRHTVILL (78 aa). The interval 289–311 is disordered; sequence AHSQSTYTKRREKLRSQSGSDDA. A helical transmembrane segment spans residues 357–377; it reads IVLDILFVCGTTSCMPALILF. Topologically, residues 378–386 are extracellular; that stretch reads STYEYKWHA. Residues 387-407 traverse the membrane as a helical segment; sequence VELGYFISILGIGRGVVLLVV. Topologically, residues 408–428 are cytoplasmic; sequence SPTLLYTLKRIYQHLNHSIDK. Residues 429-449 traverse the membrane as a helical segment; the sequence is IDIFCIQFSMIVITLSLFVMI. The Extracellular portion of the chain corresponds to 450–459; sequence RFGEKTPTSM. Residues 460 to 480 form a helical membrane-spanning segment; sequence IIFALLQALSAFCSPTLQSGI. Over 481 to 491 the chain is Cytoplasmic; that stretch reads IKYTSKKHTGE. The helical transmembrane segment at 492–512 threads the bilayer; the sequence is MFGAMALVRSCVMLVIPPILL. Residues 513–523 lie on the Extracellular side of the membrane; that stretch reads KLYGSTVSVNP. Residues 524 to 544 form a helical membrane-spanning segment; that stretch reads SLFMYIPFSTSIVAILLTFFL. Residues 545 to 555 are Cytoplasmic-facing; the sequence is RIYKNPPLDGP.

It localises to the membrane. This is an uncharacterized protein from Saccharomyces cerevisiae (strain ATCC 204508 / S288c) (Baker's yeast).